Here is a 107-residue protein sequence, read N- to C-terminus: Benzene 1,2-dioxygenase system ferredoxin subunit (107 aa).

Positions Thr-4–Val-99 constitute a Rieske domain. Residues Cys-43, His-45, Cys-62, and His-65 each contribute to the [2Fe-2S] cluster site.

This sequence belongs to the bacterial ring-hydroxylating dioxygenase ferredoxin component family. This dioxygenase system consists of four proteins: the two subunits of the hydroxylase component (BnzA and BnzB), a ferredoxin (BnzC) and a ferredoxin reductase (BnzD).

Its pathway is aromatic compound metabolism; benzene degradation; catechol from benzene: step 1/2. In terms of biological role, this protein seems to be a 2Fe-2S ferredoxin. The chain is Benzene 1,2-dioxygenase system ferredoxin subunit (bnzC) from Pseudomonas putida (Arthrobacter siderocapsulatus).